The primary structure comprises 95 residues: Small ribosomal subunit protein bS18 (95 aa).

The protein belongs to the bacterial ribosomal protein bS18 family. Part of the 30S ribosomal subunit. Forms a tight heterodimer with protein bS6.

Binds as a heterodimer with protein bS6 to the central domain of the 16S rRNA, where it helps stabilize the platform of the 30S subunit. This chain is Small ribosomal subunit protein bS18, found in Rickettsia typhi (strain ATCC VR-144 / Wilmington).